Consider the following 157-residue polypeptide: Small ribosomal subunit protein uS7 (157 aa).

It belongs to the universal ribosomal protein uS7 family. Part of the 30S ribosomal subunit. Contacts proteins S9 and S11.

Functionally, one of the primary rRNA binding proteins, it binds directly to 16S rRNA where it nucleates assembly of the head domain of the 30S subunit. Is located at the subunit interface close to the decoding center, probably blocks exit of the E-site tRNA. In Caulobacter sp. (strain K31), this protein is Small ribosomal subunit protein uS7.